A 526-amino-acid polypeptide reads, in one-letter code: MWILIYLFIIWSSLRTWVTAVDSTTTVGDDLNETVSASVWPTMSPQMTVAFRSQRDVMGNLTIDQLPYVGLNLRRVLLNNETSMVNEGNNTRLLTLFKSMLSSEANAFVLDLEQYNNDLRVVDTTLLFSDVLTALQSFIFSTQNNLYANIIVLLLNISAPELDSTEYRHQNQTLNTTYILDKNLGNSFIYKPTDLQSDRAKNNTWNIYGKSSIDGWPTLGSVLYEQKKRLVIGELTDFFNETTAPYIFPHDVFHYEQGNSTLDCPSTVEGLTDLSSIHWRFLDSLFNSVDIKEYISCGLSPIISNSAYVNNVTQLADIIHEGSVWSWDSDQPSVTQSTSKSGSSSGTLEAYNCVLLYYFANNETVTWRVGNCYNSNIGLCRYENMAFRWLVRSNKATYFDFDSYQGSKCPDQYSFNIPRSPLEQRSFIAYMRNSSFSDTQIWIDLNSISVSNCWVSGGPYASCPYEKVISRRNFVTMMVPASVCSFALLCIVVYLSVLRVPIYDNRKNWRRVINKISKSELEGVPS.

The N-terminal stretch at 1 to 20 is a signal peptide; it reads MWILIYLFIIWSSLRTWVTA. Over 21-477 the chain is Extracellular; sequence VDSTTTVGDD…VISRRNFVTM (457 aa). Asn-32, Asn-60, Asn-80, Asn-89, Asn-156, Asn-171, Asn-175, Asn-202, Asn-240, Asn-259, Asn-311, Asn-362, and Asn-433 each carry an N-linked (GlcNAc...) asparagine glycan. A helical membrane pass occupies residues 478 to 498; sequence MVPASVCSFALLCIVVYLSVL. The Cytoplasmic portion of the chain corresponds to 499–526; it reads RVPIYDNRKNWRRVINKISKSELEGVPS.

This sequence belongs to the MTC6 family.

It localises to the membrane. May be involved in telomere capping. The polypeptide is Maintenance of telomere capping protein 6 (MTC6) (Saccharomyces cerevisiae (strain YJM789) (Baker's yeast)).